The sequence spans 189 residues: Mediator of RNA polymerase II transcription subunit 21 (189 aa).

Residues 50 to 102 are disordered; it reads KIPKNSTAPPVPAGAPVPSQSSPPPPQTQRGASEAAADPNLPPAPDSPRTFAS. Over residues 58–76 the composition is skewed to pro residues; sequence PPVPAGAPVPSQSSPPPPQ. A coiled-coil region spans residues 127–170; the sequence is GIDSSEAEQEKRIRELEAELRGVEEEREAKIRELRTLGRTLERV.

This sequence belongs to the Mediator complex subunit 21 family. As to quaternary structure, component of the Mediator complex.

The protein localises to the nucleus. In terms of biological role, component of the Mediator complex, a coactivator involved in the regulated transcription of nearly all RNA polymerase II-dependent genes. Mediator functions as a bridge to convey information from gene-specific regulatory proteins to the basal RNA polymerase II transcription machinery. Mediator is recruited to promoters by direct interactions with regulatory proteins and serves as a scaffold for the assembly of a functional preinitiation complex with RNA polymerase II and the general transcription factors. The protein is Mediator of RNA polymerase II transcription subunit 21 (srb7) of Aspergillus clavatus (strain ATCC 1007 / CBS 513.65 / DSM 816 / NCTC 3887 / NRRL 1 / QM 1276 / 107).